A 314-amino-acid chain; its full sequence is Putative lipoprotein LppW (314 aa).

A signal peptide spans 1–22 (MRARPLTLLTALAAVTLVVVAG). Cys-23 carries N-palmitoyl cysteine lipidation. A lipid anchor (S-diacylglycerol cysteine) is attached at Cys-23.

It localises to the cell membrane. The protein is Putative lipoprotein LppW (lppW) of Mycobacterium bovis (strain ATCC BAA-935 / AF2122/97).